A 154-amino-acid chain; its full sequence is 3-hydroxyacyl-[acyl-carrier-protein] dehydratase FabZ (154 aa).

The active site involves His57.

The protein belongs to the thioester dehydratase family. FabZ subfamily.

It is found in the cytoplasm. The enzyme catalyses a (3R)-hydroxyacyl-[ACP] = a (2E)-enoyl-[ACP] + H2O. Involved in unsaturated fatty acids biosynthesis. Catalyzes the dehydration of short chain beta-hydroxyacyl-ACPs and long chain saturated and unsaturated beta-hydroxyacyl-ACPs. This is 3-hydroxyacyl-[acyl-carrier-protein] dehydratase FabZ from Allorhizobium ampelinum (strain ATCC BAA-846 / DSM 112012 / S4) (Agrobacterium vitis (strain S4)).